Consider the following 582-residue polypeptide: Hemagglutinin-neuraminidase (582 aa).

Topologically, residues 1–34 (MEPSKLFTMSDNATFAPGPVVNAADKKTFRTCFR) are intravirion. The chain crosses the membrane as a helical span at residues 35–55 (ILVLSVQAVTLILVIVTLGEL). The Virion surface portion of the chain corresponds to 56-582 (VRMINDQGLS…LPVLTRLTIT (527 aa)). Disulfide bonds link Cys178/Cys202, Cys192/Cys253, and Cys244/Cys257. N-linked (GlcNAc...) asparagine; by host glycans are attached at residues Asn284 and Asn329. Disulfide bonds link Cys350–Cys471, Cys382–Cys392, and Cys465–Cys475. Asn400 and Asn448 each carry an N-linked (GlcNAc...) asparagine; by host glycan. Asn507 carries N-linked (GlcNAc...) asparagine; by host glycosylation. Cys545 and Cys556 form a disulfide bridge.

It belongs to the paramyxoviruses hemagglutinin-neuraminidase family. Homotetramer; composed of disulfide-linked homodimers. Interacts with F protein trimer.

The protein localises to the virion membrane. It localises to the host cell membrane. It carries out the reaction Hydrolysis of alpha-(2-&gt;3)-, alpha-(2-&gt;6)-, alpha-(2-&gt;8)- glycosidic linkages of terminal sialic acid residues in oligosaccharides, glycoproteins, glycolipids, colominic acid and synthetic substrates.. Attaches the virus to alpha-2,3-linked sialic acid-containing cell receptors and thereby initiating infection. Binding of HN protein to the receptor induces a conformational change that allows the F protein to trigger virion/cell membranes fusion. Binds to the glycan motifs sialyl Lewis (SLe) and GM2 ganglioside (GM2-glycan). In terms of biological role, neuraminidase activity ensures the efficient spread of the virus by dissociating the mature virions from the neuraminic acid containing glycoproteins. This Mumps orthorubulavirus (MuV) protein is Hemagglutinin-neuraminidase.